A 162-amino-acid polypeptide reads, in one-letter code: Probable chemoreceptor glutamine deamidase CheD 2 (162 aa).

The protein belongs to the CheD family.

It catalyses the reaction L-glutaminyl-[protein] + H2O = L-glutamyl-[protein] + NH4(+). In terms of biological role, probably deamidates glutamine residues to glutamate on methyl-accepting chemotaxis receptors (MCPs), playing an important role in chemotaxis. This chain is Probable chemoreceptor glutamine deamidase CheD 2, found in Geobacter metallireducens (strain ATCC 53774 / DSM 7210 / GS-15).